Here is a 129-residue protein sequence, read N- to C-terminus: MKTVQFCFLFCCWKAICCNSCELTNITIAIENEECHFCISINTTWCAGYCYTRDLVFKDPATPNIQTTCTFKELVYETVRVPGCAHHADSLYTYPVATQCHCGKCDSDSTDCTTQGLGPDYCSFSEMKE.

An N-terminal signal peptide occupies residues 1 to 20 (MKTVQFCFLFCCWKAICCNS). Cystine bridges form between Cys-21–Cys-69, Cys-35–Cys-84, Cys-38–Cys-122, Cys-46–Cys-100, Cys-50–Cys-102, and Cys-105–Cys-112. N-linked (GlcNAc...) asparagine glycans are attached at residues Asn-25 and Asn-42.

Belongs to the glycoprotein hormones subunit beta family. As to quaternary structure, heterodimer. The active follitropin is a heterodimer composed of an alpha chain/CGA shared with other hormones and a unique beta chain/FSHB shown here.

Its subcellular location is the secreted. Its function is as follows. Together with the alpha chain CGA constitutes follitropin, the follicle-stimulating hormone, and provides its biological specificity to the hormone heterodimer. Binds FSHR, a G protein-coupled receptor, on target cells to activate downstream signaling pathways. Follitropin is involved in follicle development and spermatogenesis in reproductive organs. This chain is Follitropin subunit beta (FSHB), found in Saimiri boliviensis boliviensis (Bolivian squirrel monkey).